The sequence spans 128 residues: Small ribosomal subunit protein uS11 (128 aa).

The protein belongs to the universal ribosomal protein uS11 family. Part of the 30S ribosomal subunit. Interacts with proteins S7 and S18. Binds to IF-3.

Its function is as follows. Located on the platform of the 30S subunit, it bridges several disparate RNA helices of the 16S rRNA. Forms part of the Shine-Dalgarno cleft in the 70S ribosome. This is Small ribosomal subunit protein uS11 from Synechococcus sp. (strain JA-2-3B'a(2-13)) (Cyanobacteria bacterium Yellowstone B-Prime).